The primary structure comprises 1158 residues: ATP-dependent helicase/deoxyribonuclease subunit B (1158 aa).

In terms of domain architecture, UvrD-like helicase ATP-binding spans 1 to 275 (MTLHAYLGRA…QYFNQLYRFN (275 aa)). ATP is bound at residue 8-15 (GRAGTGKS). The UvrD-like helicase C-terminal domain maps to 269–583 (NQLYRFNNQD…SIGTMDLAKV (315 aa)). [4Fe-4S] cluster contacts are provided by Cys-784, Cys-1112, Cys-1115, and Cys-1121.

It belongs to the helicase family. AddB/RexB type 1 subfamily. In terms of assembly, heterodimer of AddA and AddB. Requires Mg(2+) as cofactor. [4Fe-4S] cluster is required as a cofactor.

Functionally, the heterodimer acts as both an ATP-dependent DNA helicase and an ATP-dependent, dual-direction single-stranded exonuclease. Recognizes the chi site generating a DNA molecule suitable for the initiation of homologous recombination. The AddB subunit has 5' -&gt; 3' nuclease activity but not helicase activity. The chain is ATP-dependent helicase/deoxyribonuclease subunit B from Staphylococcus aureus (strain USA300).